Reading from the N-terminus, the 538-residue chain is Chaperonin GroEL (538 aa).

ATP is bound by residues 29-32, 86-90, Gly413, 479-481, and Asp495; these read TLGP, DGTTT, and DAL.

The protein belongs to the chaperonin (HSP60) family. Forms a cylinder of 14 subunits composed of two heptameric rings stacked back-to-back. Interacts with the co-chaperonin GroES.

It is found in the cytoplasm. It carries out the reaction ATP + H2O + a folded polypeptide = ADP + phosphate + an unfolded polypeptide.. Functionally, together with its co-chaperonin GroES, plays an essential role in assisting protein folding. The GroEL-GroES system forms a nano-cage that allows encapsulation of the non-native substrate proteins and provides a physical environment optimized to promote and accelerate protein folding. In Thermotoga neapolitana, this protein is Chaperonin GroEL.